Reading from the N-terminus, the 593-residue chain is Aspartate--tRNA(Asp/Asn) ligase (593 aa).

E173 contacts L-aspartate. The segment at 197–200 (QLFK) is aspartate. L-aspartate is bound at residue R219. ATP contacts are provided by residues 219–221 (RDE) and Q228. H451 is an L-aspartate binding site. ATP is bound at residue E485. R492 contacts L-aspartate. 537–540 (GIDR) lines the ATP pocket.

Belongs to the class-II aminoacyl-tRNA synthetase family. Type 1 subfamily. As to quaternary structure, homodimer.

The protein resides in the cytoplasm. The catalysed reaction is tRNA(Asx) + L-aspartate + ATP = L-aspartyl-tRNA(Asx) + AMP + diphosphate. Aspartyl-tRNA synthetase with relaxed tRNA specificity since it is able to aspartylate not only its cognate tRNA(Asp) but also tRNA(Asn). Reaction proceeds in two steps: L-aspartate is first activated by ATP to form Asp-AMP and then transferred to the acceptor end of tRNA(Asp/Asn). This is Aspartate--tRNA(Asp/Asn) ligase from Legionella pneumophila (strain Paris).